We begin with the raw amino-acid sequence, 313 residues long: Aspartate carbamoyltransferase catalytic subunit (313 aa).

The carbamoyl phosphate site is built by R59 and T60. L-aspartate is bound at residue K87. 3 residues coordinate carbamoyl phosphate: R109, H137, and Q140. R170 and R224 together coordinate L-aspartate. Positions 265 and 266 each coordinate carbamoyl phosphate.

It belongs to the aspartate/ornithine carbamoyltransferase superfamily. ATCase family. Heterododecamer (2C3:3R2) of six catalytic PyrB chains organized as two trimers (C3), and six regulatory PyrI chains organized as three dimers (R2).

The enzyme catalyses carbamoyl phosphate + L-aspartate = N-carbamoyl-L-aspartate + phosphate + H(+). The protein operates within pyrimidine metabolism; UMP biosynthesis via de novo pathway; (S)-dihydroorotate from bicarbonate: step 2/3. In terms of biological role, catalyzes the condensation of carbamoyl phosphate and aspartate to form carbamoyl aspartate and inorganic phosphate, the committed step in the de novo pyrimidine nucleotide biosynthesis pathway. This is Aspartate carbamoyltransferase catalytic subunit from Rhizobium meliloti (strain 1021) (Ensifer meliloti).